We begin with the raw amino-acid sequence, 580 residues long: MESQCDYSMYFPAVPLPPRAELAGDPGRYRALPRRNHLYLGETVRFLLVLRCRGSVGAGVGGGAGLASRGAWTELATSLAALASVSAGGALPGCGSAGDQDADPPGGGDPGGGGLFRGCSPLLTHGQGPATSGGATTLPVEEPIVSTDEVIFPLTVSLDRLPPGTPKAKIVVTVWKREVEAPEVRDQGYLRLLQTRSPGETFRGEQSAFKAQVSTLLTLLPPPVLKCRQFTVAGKHLTVLKVLNSSSQEEISIWDIRILPNFNASYLPVMPDGSVLLVDNVCHQSGEVSMGSFCRLPGTSGYFPCPLSALEEHNFLFQLRGGEQPPPGAKEGLEVPLIAVVQWSTPKLPFTQSIYTHYRLPSVRLDRPCFVMTASCESPVRTYERFTVTYTLLNNLQDFLAVRLVWTPEHAQAGKQLCEEERRAMQAALDSIVCHTPLNNLGFSRKGSALTFSVAFQALRTGLFELSQHMKLKLQFTASVSHPPPEARPLSRKSSPSSPAVRDLVERHQASLGRSQSFSHQQPSRSHLMRSGSVMERRAITPPVASPVGRPLYLPPDKAVLSLDKIAKRECKVLVVEPVK.

2 disordered regions span residues 95 to 134 and 480 to 533; these read GSAG…TSGG and VSHP…RSGS. The span at 105–116 shows a compositional bias: gly residues; it reads PGGGDPGGGGLF. Position 491 is a phosphoserine (Ser491). The span at 492 to 502 shows a compositional bias: low complexity; it reads RKSSPSSPAVR. A compositionally biased stretch (polar residues) spans 512–525; the sequence is LGRSQSFSHQQPSR. Residue Ser517 is modified to Phosphoserine. Thr541 carries the post-translational modification Phosphothreonine. Ser546 bears the Phosphoserine mark.

In terms of assembly, component of the multisubunit TRAPP II complex, which includes at least TRAPPC1, TRAPPC2, TRAPPC2L, TRAPPC3, TRAPPC4, TRAPPC5, TRAPPC6A/B, TRAPPC9, TRAPPC10 and TRAPPC14. TRAPPC9, TRAPPC10 and TRAPPC14 are specific subunits of the TRAPP II complex. Interacts with alpha-tubulin during mitosis. Interacts with RAB3IP (via the N-terminal region); this interaction mediates RAB3IP association with the TRAPP II complex. Interacts with TRAPPC10. Interacts with FBF1.

It is found in the cytoplasm. It localises to the cytoskeleton. The protein resides in the spindle. The protein localises to the vesicle. Its subcellular location is the midbody. Its function is as follows. Specific subunit of the TRAPP (transport protein particle) II complex, a highly conserved vesicle tethering complex that functions in late Golgi trafficking as a membrane tether. TRAPPC14 is dispensable for TRAPPII complex integrity but mediates RAB3IP preciliary vesicle trafficking to the mother centriole during ciliogenesis. Modulates YAP1 activity as transcriptional regulator. This chain is Trafficking protein particle complex subunit 14, found in Mus musculus (Mouse).